Here is a 456-residue protein sequence, read N- to C-terminus: Glycosyl hydrolase family 109 protein 2 (456 aa).

The segment at residues 1–33 is a signal peptide (tat-type signal); that stretch reads MSGFDRRSFLKASMVTAAATALAACASSERATG. NAD(+) contacts are provided by residues 63–64, Asp-85, 134–137, 154–155, and Asn-183; these read ER, WAWH, and EV. Substrate-binding positions include Tyr-212, Arg-231, 243 to 246, and Tyr-325; that span reads YPTH. Residue Tyr-243 coordinates NAD(+).

The protein belongs to the Gfo/Idh/MocA family. Glycosyl hydrolase 109 subfamily. It depends on NAD(+) as a cofactor. Post-translationally, predicted to be exported by the Tat system. The position of the signal peptide cleavage has not been experimentally proven.

Glycosidase. The sequence is that of Glycosyl hydrolase family 109 protein 2 from Shewanella sp. (strain MR-4).